The primary structure comprises 467 residues: Chromosomal replication initiator protein DnaA (467 aa).

Residues 1–90 (MSLSLWQQCL…KPVTQTPQAA (90 aa)) form a domain I, interacts with DnaA modulators region. The segment at 91–130 (VTSNVAAPALVAQTQPQRAAPSTRSGWDNVPAPAEPTYRS) is domain II. The domain III, AAA+ region stretch occupies residues 131–347 (NVNVKHTFDN…GALNRVIANA (217 aa)). Residues Gly175, Gly177, Lys178, and Thr179 each coordinate ATP. Positions 348 to 467 (NFTGRAITID…FSNLIRTLSS (120 aa)) are domain IV, binds dsDNA.

The protein belongs to the DnaA family. Oligomerizes as a right-handed, spiral filament on DNA at oriC.

The protein resides in the cytoplasm. In terms of biological role, plays an essential role in the initiation and regulation of chromosomal replication. ATP-DnaA binds to the origin of replication (oriC) to initiate formation of the DNA replication initiation complex once per cell cycle. Binds the DnaA box (a 9 base pair repeat at the origin) and separates the double-stranded (ds)DNA. Forms a right-handed helical filament on oriC DNA; dsDNA binds to the exterior of the filament while single-stranded (ss)DNA is stabiized in the filament's interior. The ATP-DnaA-oriC complex binds and stabilizes one strand of the AT-rich DNA unwinding element (DUE), permitting loading of DNA polymerase. After initiation quickly degrades to an ADP-DnaA complex that is not apt for DNA replication. Binds acidic phospholipids. The chain is Chromosomal replication initiator protein DnaA from Shigella dysenteriae serotype 1 (strain Sd197).